Reading from the N-terminus, the 250-residue chain is AA9 family lytic polysaccharide monooxygenase B (250 aa).

Residues 1–21 (MTLSKITSIAGLLASASLVAG) form the signal peptide. Cu(2+) contacts are provided by H22 and H107. The residue at position 22 (H22) is a Methylhistidine. Cystine bridges form between C77/C199 and C118/C122. An N-linked (GlcNAc...) asparagine glycan is attached at N159. O2 is bound by residues H185 and Q194. Residue Y196 coordinates Cu(2+).

Belongs to the polysaccharide monooxygenase AA9 family. Requires Cu(2+) as cofactor. The catalytically essential N-terminal histidine His-22 is post-translationally modified by methylation to prevent protonation of the histidine side chain, and protect the critical active site of the enzyme from oxidative damage.

It localises to the secreted. The catalysed reaction is [(1-&gt;4)-beta-D-glucosyl]n+m + reduced acceptor + O2 = 4-dehydro-beta-D-glucosyl-[(1-&gt;4)-beta-D-glucosyl]n-1 + [(1-&gt;4)-beta-D-glucosyl]m + acceptor + H2O.. In terms of biological role, lytic polysaccharide monooxygenase (LPMO) that depolymerizes crystalline and amorphous polysaccharides via the oxidation of scissile alpha- or beta-(1-4)-glycosidic bonds, yielding C1 and C4 oxidation products. Catalysis by LPMOs requires the reduction of the active-site copper from Cu(II) to Cu(I) by a reducing agent and H(2)O(2) or O(2) as a cosubstrate. Shows activity on phosphoric acid swollen cellulose, on NaOH pretreated soy spent flakes as well as on crystalline cellulose (Avicel). Does not have a positive effect on cel6A activity, but acts synergistically with endoglucanase egl7. This is AA9 family lytic polysaccharide monooxygenase B from Aspergillus fumigatus (strain ATCC MYA-4609 / CBS 101355 / FGSC A1100 / Af293) (Neosartorya fumigata).